A 724-amino-acid chain; its full sequence is Phosphoribosylformylglycinamidine synthase subunit PurL (724 aa).

The active site involves His-34. ATP contacts are provided by Tyr-37 and Lys-75. Position 77 (Glu-77) interacts with Mg(2+). Substrate is bound by residues 78–81 (SHNH) and Arg-100. Residue His-79 is the Proton acceptor of the active site. Asp-101 lines the Mg(2+) pocket. Gln-221 lines the substrate pocket. Asp-249 provides a ligand contact to Mg(2+). 292–294 (ESQ) is a substrate binding site. ATP is bound by residues Asp-478 and Gly-515. Residue Ser-518 coordinates substrate.

The protein belongs to the FGAMS family. In terms of assembly, monomer. Part of the FGAM synthase complex composed of 1 PurL, 1 PurQ and 2 PurS subunits.

It is found in the cytoplasm. It catalyses the reaction N(2)-formyl-N(1)-(5-phospho-beta-D-ribosyl)glycinamide + L-glutamine + ATP + H2O = 2-formamido-N(1)-(5-O-phospho-beta-D-ribosyl)acetamidine + L-glutamate + ADP + phosphate + H(+). Its pathway is purine metabolism; IMP biosynthesis via de novo pathway; 5-amino-1-(5-phospho-D-ribosyl)imidazole from N(2)-formyl-N(1)-(5-phospho-D-ribosyl)glycinamide: step 1/2. Its function is as follows. Part of the phosphoribosylformylglycinamidine synthase complex involved in the purines biosynthetic pathway. Catalyzes the ATP-dependent conversion of formylglycinamide ribonucleotide (FGAR) and glutamine to yield formylglycinamidine ribonucleotide (FGAM) and glutamate. The FGAM synthase complex is composed of three subunits. PurQ produces an ammonia molecule by converting glutamine to glutamate. PurL transfers the ammonia molecule to FGAR to form FGAM in an ATP-dependent manner. PurS interacts with PurQ and PurL and is thought to assist in the transfer of the ammonia molecule from PurQ to PurL. In Caldivirga maquilingensis (strain ATCC 700844 / DSM 13496 / JCM 10307 / IC-167), this protein is Phosphoribosylformylglycinamidine synthase subunit PurL.